The following is a 416-amino-acid chain: Geranyl diphosphate synthase (416 aa).

Residues Asp157 and Asp161 each contribute to the Mg(2+) site. Positions 157 to 161 (DDIMD) match the DDXXD motif motif.

Belongs to the FPP/GGPP synthase family. It depends on Mg(2+) as a cofactor. As to expression, specifically expressed in the anterior midgut of male beetles, the site of aggregation pheromone biosynthesis.

The enzyme catalyses isopentenyl diphosphate + dimethylallyl diphosphate = (2E)-geranyl diphosphate + diphosphate. It participates in pheromone biosynthesis. Its function is as follows. Geranyl diphosphate synthase involved in pheromone biosynthesis. The protein is Geranyl diphosphate synthase of Ips pini (Pine engraver beetle).